The primary structure comprises 301 residues: Methionine aminopeptidase (301 aa).

Substrate is bound at residue H65. D85, D96, and H156 together coordinate a divalent metal cation. Position 164 (H164) interacts with substrate. A divalent metal cation contacts are provided by E189 and E284.

Belongs to the peptidase M24A family. Methionine aminopeptidase archaeal type 2 subfamily. In terms of assembly, monomer. Requires Co(2+) as cofactor. It depends on Zn(2+) as a cofactor. Mn(2+) is required as a cofactor. The cofactor is Fe(2+).

The catalysed reaction is Release of N-terminal amino acids, preferentially methionine, from peptides and arylamides.. In terms of biological role, removes the N-terminal methionine from nascent proteins. The N-terminal methionine is often cleaved when the second residue in the primary sequence is small and uncharged (Met-Ala-, Cys, Gly, Pro, Ser, Thr, or Val). In Saccharolobus solfataricus (strain ATCC 35092 / DSM 1617 / JCM 11322 / P2) (Sulfolobus solfataricus), this protein is Methionine aminopeptidase.